Reading from the N-terminus, the 390-residue chain is Transposase for insertion sequence element IS21 (390 aa).

One can recognise an HTH IS21-type domain in the interval 5–66 (EDFYMIKQMR…PFMDYIDMRL (62 aa)). The H-T-H motif DNA-binding region spans 20–39 (IVDIATQIGCSERTVRRYLK). An Integrase catalytic domain is found at 111–285 (FETQPRYQLQ…TPEQRFALEQ (175 aa)).

It belongs to the transposase IS21/IS408/IS1162 family.

Its function is as follows. Involved in the transposition of the insertion sequence. The sequence is that of Transposase for insertion sequence element IS21 (istA) from Pseudomonas aeruginosa.